The chain runs to 396 residues: Cysteine protease ATG4A (396 aa).

Catalysis depends on Cys-77, which acts as the Nucleophile. Active-site residues include Asp-276 and His-278. The short motif at 390 to 393 is the LIR element; it reads FEIL.

Belongs to the peptidase C54 family. In terms of assembly, interacts with ATG9A; the interaction is direct.

It localises to the cytoplasm. It catalyses the reaction [protein]-C-terminal L-amino acid-glycyl-phosphatidylethanolamide + H2O = [protein]-C-terminal L-amino acid-glycine + a 1,2-diacyl-sn-glycero-3-phosphoethanolamine. With respect to regulation, inhibited by N-ethylmaleimide. Redox-regulated during autophagy since reducing conditions activate ATG4A whereas an oxidizing environment such as the presence of H(2)O(2) inhibits its activity. Its function is as follows. Cysteine protease that plays a key role in autophagy by mediating both proteolytic activation and delipidation of ATG8 family proteins. The protease activity is required for proteolytic activation of ATG8 family proteins: cleaves the C-terminal amino acid of ATG8 proteins to reveal a C-terminal glycine. Exposure of the glycine at the C-terminus is essential for ATG8 proteins conjugation to phosphatidylethanolamine (PE) and insertion to membranes, which is necessary for autophagy. Preferred substrate is GABARAPL2 followed by MAP1LC3A and GABARAP. Protease activity is also required to counteract formation of high-molecular weight conjugates of ATG8 proteins (ATG8ylation): acts as a deubiquitinating-like enzyme that removes ATG8 conjugated to other proteins, such as ATG3. In addition to the protease activity, also mediates delipidation of ATG8 family proteins. Catalyzes delipidation of PE-conjugated forms of ATG8 proteins during macroautophagy. Compared to ATG4B, the major protein for proteolytic activation of ATG8 proteins, shows weaker ability to cleave the C-terminal amino acid of ATG8 proteins, while it displays stronger delipidation activity. Involved in phagophore growth during mitophagy independently of its protease activity and of ATG8 proteins: acts by regulating ATG9A trafficking to mitochondria and promoting phagophore-endoplasmic reticulum contacts during the lipid transfer phase of mitophagy. The protein is Cysteine protease ATG4A of Mus musculus (Mouse).